Here is a 290-residue protein sequence, read N- to C-terminus: tRNA dimethylallyltransferase (290 aa).

Residue 11–18 (GPTASGKS) participates in ATP binding. 13–18 (TASGKS) is a substrate binding site. 2 interaction with substrate tRNA regions span residues 36-39 (DSMQ) and 158-162 (QRIVR).

The protein belongs to the IPP transferase family. In terms of assembly, monomer. The cofactor is Mg(2+).

The enzyme catalyses adenosine(37) in tRNA + dimethylallyl diphosphate = N(6)-dimethylallyladenosine(37) in tRNA + diphosphate. Functionally, catalyzes the transfer of a dimethylallyl group onto the adenine at position 37 in tRNAs that read codons beginning with uridine, leading to the formation of N6-(dimethylallyl)adenosine (i(6)A). In Bartonella tribocorum (strain CIP 105476 / IBS 506), this protein is tRNA dimethylallyltransferase.